Here is a 179-residue protein sequence, read N- to C-terminus: Large ribosomal subunit protein uL5 (179 aa).

This sequence belongs to the universal ribosomal protein uL5 family. In terms of assembly, part of the 50S ribosomal subunit; part of the 5S rRNA/L5/L18/L25 subcomplex. Contacts the 5S rRNA and the P site tRNA. Forms a bridge to the 30S subunit in the 70S ribosome.

In terms of biological role, this is one of the proteins that bind and probably mediate the attachment of the 5S RNA into the large ribosomal subunit, where it forms part of the central protuberance. In the 70S ribosome it contacts protein S13 of the 30S subunit (bridge B1b), connecting the 2 subunits; this bridge is implicated in subunit movement. Contacts the P site tRNA; the 5S rRNA and some of its associated proteins might help stabilize positioning of ribosome-bound tRNAs. In Lawsonia intracellularis (strain PHE/MN1-00), this protein is Large ribosomal subunit protein uL5.